Consider the following 387-residue polypeptide: Chaperone protein DnaJ (387 aa).

A J domain is found at 6 to 70 (DYYETLGVSR…QKRAAYDQYG (65 aa)). Residues 143-225 (GKDTKISYDR…CHGTGHEQER (83 aa)) form a CR-type zinc finger. Positions 156, 159, 173, 176, 199, 202, 213, and 216 each coordinate Zn(2+). 4 CXXCXGXG motif repeats span residues 156–163 (CHTCNGSG), 173–180 (CHKCHGSG), 199–206 (CDVCGGTG), and 213–220 (CPTCHGTG).

Belongs to the DnaJ family. As to quaternary structure, homodimer. It depends on Zn(2+) as a cofactor.

The protein localises to the cytoplasm. Participates actively in the response to hyperosmotic and heat shock by preventing the aggregation of stress-denatured proteins and by disaggregating proteins, also in an autonomous, DnaK-independent fashion. Unfolded proteins bind initially to DnaJ; upon interaction with the DnaJ-bound protein, DnaK hydrolyzes its bound ATP, resulting in the formation of a stable complex. GrpE releases ADP from DnaK; ATP binding to DnaK triggers the release of the substrate protein, thus completing the reaction cycle. Several rounds of ATP-dependent interactions between DnaJ, DnaK and GrpE are required for fully efficient folding. Also involved, together with DnaK and GrpE, in the DNA replication of plasmids through activation of initiation proteins. The polypeptide is Chaperone protein DnaJ (Lacticaseibacillus paracasei (strain ATCC 334 / BCRC 17002 / CCUG 31169 / CIP 107868 / KCTC 3260 / NRRL B-441) (Lactobacillus paracasei)).